The sequence spans 152 residues: Photosystem II extrinsic protein U, chloroplastic (152 aa).

Residues 1–35 (MDSTAFVGAAAPLRVAAAARSTICMAAADDKPVVS) constitute a chloroplast transit peptide. A thylakoid-targeting transit peptide spans 36–59 (RRAALTGAAAAALAAVAGSLPALA).

The protein belongs to the PsbU family. PSII is composed of 1 copy each of membrane proteins PsbA, PsbB, PsbC, PsbD, PsbE, PsbF, PsbH, PsbI, PsbJ, PsbK, PsbL, PsbM, PsbT, PsbX, PsbY, PsbZ, Psb30/Ycf12, at least 3 peripheral proteins of the oxygen-evolving complex and a large number of cofactors. It forms dimeric complexes. The oxygen-evolving complex in red algae is composed of PsbO (OEC33), PsbQ', cytochrome c-550 and PsbU. In terms of processing, predicted to be translocated into the thylakoid lumen by the Tat system.

It is found in the plastid. The protein localises to the chloroplast thylakoid membrane. Functionally, one of the extrinsic, lumenal subunits of photosystem II (PSII). PSII is a light-driven water plastoquinone oxidoreductase, using light energy to abstract electrons from H(2)O, generating a proton gradient subsequently used for ATP formation. The extrinsic proteins stabilize the structure of photosystem II oxygen-evolving complex (OEC), the ion environment of oxygen evolution and protect the OEC against heat-induced inactivation. This is Photosystem II extrinsic protein U, chloroplastic from Pyropia yezoensis (Susabi-nori).